We begin with the raw amino-acid sequence, 553 residues long: Hydroxylamine reductase (553 aa).

[4Fe-4S] cluster is bound by residues cysteine 3, cysteine 6, cysteine 15, and cysteine 21. Residues histidine 244, glutamate 268, cysteine 312, cysteine 406, cysteine 434, cysteine 459, glutamate 494, and lysine 496 each contribute to the hybrid [4Fe-2O-2S] cluster site. Position 406 is a cysteine persulfide (cysteine 406).

The protein belongs to the HCP family. As to quaternary structure, monomer. [4Fe-4S] cluster is required as a cofactor. Requires hybrid [4Fe-2O-2S] cluster as cofactor.

The protein localises to the cytoplasm. It catalyses the reaction A + NH4(+) + H2O = hydroxylamine + AH2 + H(+). Catalyzes the reduction of hydroxylamine to form NH(3) and H(2)O. This is Hydroxylamine reductase from Nitratidesulfovibrio vulgaris (strain ATCC 29579 / DSM 644 / CCUG 34227 / NCIMB 8303 / VKM B-1760 / Hildenborough) (Desulfovibrio vulgaris).